The primary structure comprises 90 residues: DNA-directed RNA polymerase subunit omega (90 aa).

The disordered stretch occupies residues 69–90 (RQEQQEQEAAELAAVSSIARNR).

The protein belongs to the RNA polymerase subunit omega family. As to quaternary structure, the RNAP catalytic core consists of 2 alpha, 1 beta, 1 beta' and 1 omega subunit. When a sigma factor is associated with the core the holoenzyme is formed, which can initiate transcription.

The catalysed reaction is RNA(n) + a ribonucleoside 5'-triphosphate = RNA(n+1) + diphosphate. Functionally, promotes RNA polymerase assembly. Latches the N- and C-terminal regions of the beta' subunit thereby facilitating its interaction with the beta and alpha subunits. This Vibrio vulnificus (strain CMCP6) protein is DNA-directed RNA polymerase subunit omega.